The chain runs to 709 residues: ATP-binding cassette sub-family F member 3 (709 aa).

Alanine 2 is modified (N-acetylalanine). A Phosphoserine modification is found at serine 83. A compositionally biased stretch (basic and acidic residues) spans 129–143; the sequence is RLKAKQEKRSEKETL. Residues 129 to 171 form a disordered region; it reads RLKAKQEKRSEKETLKTSNPLVLEEASASQAGSRKESRLESSG. Serine 155, serine 157, and serine 161 each carry phosphoserine. Basic and acidic residues predominate over residues 161–171; it reads SRKESRLESSG. 2 ABC transporter domains span residues 178-424 and 492-707; these read VRIE…LNQQ and LQLD…RREG. 210-217 is a binding site for ATP; the sequence is GRNGLGKT. Serine 283 bears the Phosphoserine mark. 525–532 provides a ligand contact to ATP; sequence GENGAGKS.

It belongs to the ABC transporter superfamily. ABCF family. EF3 subfamily.

Displays an antiviral effect against flaviviruses such as west Nile virus (WNV) in the presence of OAS1B. In Mus musculus (Mouse), this protein is ATP-binding cassette sub-family F member 3 (Abcf3).